Reading from the N-terminus, the 627-residue chain is Nuclear receptor subfamily 4 group A member 3 (627 aa).

The activation function (AF)-1 domain stretch occupies residues 1 to 112 (MPCVQAQYSP…HHHHHHHHHQ (112 aa)). The tract at residues 1 to 139 (MPCVQAQYSP…PSTSMYFKQS (139 aa)) is required for DNA-PK heterotrimer. The interaction with NCOA1, NCOA2, NCOA3 and KAT2B stretch occupies residues 1–292 (MPCVQAQYSP…NRSSSSGEGT (292 aa)). Disordered stretches follow at residues 96-162 (HGYH…DELP) and 268-289 (ASSLLGESPSLPSPPNRSSSSG). The span at 97–112 (GYHHHHHHHHHHHHHQ) shows a compositional bias: basic residues. Residues 141–150 (PSTPTTPGFP) show a composition bias toward pro residues. The span at 269-288 (SSLLGESPSLPSPPNRSSSS) shows a compositional bias: low complexity. Positions 290–365 (EGTCAVCGDN…VGMVKEVVRT (76 aa)) form a DNA-binding region, nuclear receptor. NR C4-type zinc fingers lie at residues 293–313 (CAVCGDNAACQHYGVRTCEGC) and 329–353 (CLANKNCPVDKRRRNRCQYCRFQKC). The tract at residues 365 to 395 (TDSLKGRRGRLPSKPKSPLQQEPSQPSPPSP) is disordered. Residues 378 to 388 (KPKSPLQQEPS) show a composition bias toward low complexity. The segment at 380–627 (KSPLQQEPSQ…DKLFLDTLPF (248 aa)) is interaction with KAT2B. Residues 395–624 (PPICMMNALV…SVIDKLFLDT (230 aa)) enclose the NR LBD domain.

This sequence belongs to the nuclear hormone receptor family. NR4 subfamily. Interacts with SIX3 (via homeobox); differentially regulates the transcriptional activities of NR4A3. Interacts with NCOA2; potentiates the activity of the NR4A3. Interacts with NCOA1, NCOA3, MED1 and KAT2B. Interacts with EP300 and NCOA2; mediates the recruitment of MED1 in the coactivator complex. Interacts with the constituents of DNA-PK heterotrimer PRKDC, XRCC6 and XRCC5; phosphorylates and prevents NR4A3 ubiquitinylation and degradation. Interacts with NR3C1 (via nuclear receptor DNA-binding domain); the interactions represses transcription activity of NR4A3 on the POMC promoter Nur response element (NurRE). Interacts with TRIM28; the interactions potentiates NR4A3 activity on NurRE promoter. Binds DNA as a monomer and homodimer. Interacts with PARP1; activates PARP1 by improving acetylation of PARP1 and suppressing the interaction between PARP1 and SIRT1. Post-translationally, phosphorylated by PRKDC. As to expression, ubiquitous. Highest levels of expression in brain. Widely expressed throughout the arcuate nucleus region of the hypothalamus, namely in AgRP neurons.

Its subcellular location is the nucleus. Its function is as follows. Transcriptional activator that binds to regulatory elements in promoter regions in a cell- and response element (target)-specific manner. Induces gene expression by binding as monomers to the NR4A1 response element (NBRE) 5'-AAAAGGTCA-3' site and as homodimers to the Nur response element (NurRE) site in the promoter of their regulated target genes. Plays a role in the regulation of proliferation, survival and differentiation of many different cell types and also in metabolism and inflammation. Mediates proliferation of vascular smooth muscle, myeloid progenitor cell and type B pancreatic cells; promotes mitogen-induced vascular smooth muscle cell proliferation through transactivation of SKP2 promoter by binding a NBRE site. Upon PDGF stimulation, stimulates vascular smooth muscle cell proliferation by regulating CCND1 and CCND2 expression. In islets, induces type B pancreatic cell proliferation through up-regulation of genes that activate cell cycle, as well as genes that cause degradation of the CDKN1A. Negatively regulates myeloid progenitor cell proliferation by repressing RUNX1 in a NBRE site-independent manner. During inner ear, plays a role as a key mediator of the proliferative growth phase of semicircular canal development. Also mediates survival of neuron and smooth muscle cells; mediates CREB-induced neuronal survival, and during hippocampus development, plays a critical role in pyramidal cell survival and axonal guidance. Is required for S phase entry of the cell cycle and survival of smooth muscle cells by inducing CCND1, resulting in RB1 phosphorylation. Binds to NBRE motif in CCND1 promoter, resulting in the activation of the promoter and CCND1 transcription. Also plays a role in inflammation; upon TNF stimulation, mediates monocyte adhesion by inducing the expression of VCAM1 and ICAM1 by binding to the NBRE consensus site. In mast cells activated by Fc-epsilon receptor cross-linking, promotes the synthesis and release of cytokines but impairs events leading to degranulation. Also plays a role in metabolism; by modulating feeding behavior; and by playing a role in energy balance by inhibiting the glucocorticoid-induced orexigenic neuropeptides AGRP expression, at least in part by forming a complex with activated NR3C1 on the AGRP- glucocorticoid response element (GRE), and thus weakening the DNA binding activity of NR3C1. Upon catecholamines stimulation, regulates gene expression that controls oxidative metabolism in skeletal muscle. Plays a role in glucose transport by regulating translocation of the SLC2A4 glucose transporter to the cell surface. Finally, during gastrulation plays a crucial role in the formation of anterior mesoderm by controlling cell migration. Inhibits adipogenesis. Also participates in cardiac hypertrophy by activating PARP1. The protein is Nuclear receptor subfamily 4 group A member 3 (Nr4a3) of Mus musculus (Mouse).